Reading from the N-terminus, the 303-residue chain is uncharacterized protein (303 aa).

Serine 63 bears the Phosphoserine mark.

It belongs to the HAD-like hydrolase superfamily.

It is found in the cytoplasm. The protein resides in the nucleus. This is an uncharacterized protein from Schizosaccharomyces pombe (strain 972 / ATCC 24843) (Fission yeast).